The sequence spans 95 residues: Beta-defensin 132 (95 aa).

The first 22 residues, 1–22, serve as a signal peptide directing secretion; that stretch reads MKFLLLVLAALGFLTQVIPASG. Disulfide bonds link Cys-27/Cys-55, Cys-35/Cys-49, and Cys-39/Cys-56. The disordered stretch occupies residues 72 to 95; that stretch reads GNHWPSRSRNTQRKNKKQQTTVTP.

It belongs to the beta-defensin family.

Its subcellular location is the secreted. Its function is as follows. Has antibacterial activity. This chain is Beta-defensin 132 (DEFB132), found in Macaca fascicularis (Crab-eating macaque).